Reading from the N-terminus, the 169-residue chain is Signal peptidase complex subunit 1 (169 aa).

Residues 1-93 lie on the Cytoplasmic side of the membrane; that stretch reads MARGGDTGCT…QKLAEQMFQG (93 aa). Positions 91-169 are (Microbial infection) Interaction with JEV NS2B; sequence FQGIILFSAI…RKIKRHAKNN (79 aa). Residues 94 to 114 form a helical membrane-spanning segment; that stretch reads IILFSAIVGFIYGYVAEQFGW. Residues 110–169 are (Microbial infection) Interaction with HCV NS2 and HCV E2; the sequence is EQFGWTVYIVMAGFAFSCLLTLPPWPIYRRHPLKWLPVQESSTDDKKPGERKIKRHAKNN. Residue T115 is a topological domain, lumenal. The helical transmembrane segment at 116–136 threads the bilayer; that stretch reads VYIVMAGFAFSCLLTLPPWPI. Over 137–169 the chain is Cytoplasmic; it reads YRRHPLKWLPVQESSTDDKKPGERKIKRHAKNN. The interval 148–169 is disordered; the sequence is QESSTDDKKPGERKIKRHAKNN.

The protein belongs to the SPCS1 family. As to quaternary structure, component of the signal peptidase complex paralog A (SPC-A) composed of a catalytic subunit SEC11A and three accessory subunits SPCS1, SPCS2 and SPCS3. Component of the signal peptidase complex paralog C (SPC-C) composed of a catalytic subunit SEC11C and three accessory subunits SPCS1, SPCS2 and SPCS3. Within the complex, interacts with SPCS2 and SPCS3. The complex induces a local thinning of the ER membrane which is used to measure the length of the signal peptide (SP) h-region of protein substrates. This ensures the selectivity of the complex towards h-regions shorter than 18-20 amino acids. In terms of assembly, (Microbial infection) Interacts with hepatitis C virus (HCV) proteins NS2 and E2. Interacts with NS2B from Japanese encephalitis virus (JEV), West Nile virus (WNV), and Zika virus (ZIKV). Post-translationally, may be phosphorylated.

It is found in the endoplasmic reticulum membrane. Its function is as follows. Component of the signal peptidase complex (SPC) which catalyzes the cleavage of N-terminal signal sequences from nascent proteins as they are translocated into the lumen of the endoplasmic reticulum. Dispensable for SPC enzymatic activity. (Microbial infection) Required for the post-translational processing of proteins involved in virion assembly and secretion from flaviviruses such as West Nile virus (WNV), Japanese encephalitis virus (JEV), Dengue virus type 2 (DENV-2), Yellow Fever virus (YFV), Zika virus (ZIKV) and hepatitis C virus (HCV). Plays a key role in the post-translational processing of flaviviral structural proteins prM, E, and NS1. In HCV, it is involved in virion assembly where it promotes the interaction between HCV virus proteins NS2 and E2. The sequence is that of Signal peptidase complex subunit 1 (SPCS1) from Homo sapiens (Human).